Reading from the N-terminus, the 95-residue chain is Histone-like DNA-binding protein (95 aa).

Belongs to the bacterial histone-like protein family.

This Rickettsia felis (strain ATCC VR-1525 / URRWXCal2) (Rickettsia azadi) protein is Histone-like DNA-binding protein.